The chain runs to 305 residues: Syntaxin-123 (305 aa).

M1 is subject to N-acetylmethionine. Residues 1 to 278 lie on the Cytoplasmic side of the membrane; that stretch reads MNDLISSSFK…KVLQRNNRKW (278 aa). A coiled-coil region spans residues 46–66; sequence VKEDMKAVDEIHKRLQDANEE. In terms of domain architecture, t-SNARE coiled-coil homology spans 206–268; it reads LSEIQERHDT…MRGTDQLHGA (63 aa). The helical; Anchor for type IV membrane protein transmembrane segment at 279–299 threads the bilayer; that stretch reads ACIATILAIVVVIVILFPILF. Residues 300–305 are Vesicular-facing; it reads NTLLRP.

This sequence belongs to the syntaxin family. In terms of assembly, part of the t-SNARE complex. As to expression, expressed in tips of root hairs.

The protein resides in the membrane. In terms of biological role, vesicle trafficking protein that functions in the secretory pathway. Acts in coordination with SYP132 to mediate tip-focused membrane trafficking for root hair tip growth. Functions in root hair elongation by forming SNARE complexes with VAMP721,VAMP722 or VAMP724. In Arabidopsis thaliana (Mouse-ear cress), this protein is Syntaxin-123.